Here is a 569-residue protein sequence, read N- to C-terminus: 4-hydroxy-7-methoxy-3-oxo-3,4-dihydro-2H-1,4-benzoxazin-2-yl glucoside beta-D-glucosidase 1b, chloroplastic (569 aa).

Residues 1-50 constitute a chloroplast transit peptide; that stretch reads MALLAAATLNPTTHLSLRSRAGRNSENLWLRSTASSQKSKGRFCNLTIRA. A beta-D-glucoside contacts are provided by residues Q92, H194, and 239-240; that span reads NE. E240 acts as the Proton donor in catalysis. Residues C259 and C265 are joined by a disulfide bond. A beta-D-glucoside contacts are provided by residues Y383, E456, W504, 511-512, and F520; that span reads EW. E456 acts as the Nucleophile in catalysis.

This sequence belongs to the glycosyl hydrolase 1 family. In terms of assembly, homo- and heterohexamers. Expressed in young seedlings early after germination.

It is found in the plastid. The protein resides in the chloroplast. The enzyme catalyses Hydrolysis of terminal, non-reducing beta-D-glucosyl residues with release of beta-D-glucose.. The catalysed reaction is DIMBOA beta-D-glucoside + H2O = DIMBOA + D-glucose. It carries out the reaction DIBOA beta-D-glucoside + H2O = DIBOA + D-glucose. Acts in defense of young plant parts against pests via the production of hydroxamic acids from hydroxamic acid glucosides. Enzymatic activity is highly correlated with plant growth. The preferred substrate is DIMBOA-beta-D-glucoside. The chain is 4-hydroxy-7-methoxy-3-oxo-3,4-dihydro-2H-1,4-benzoxazin-2-yl glucoside beta-D-glucosidase 1b, chloroplastic (GLU1B) from Triticum aestivum (Wheat).